A 344-amino-acid polypeptide reads, in one-letter code: uncharacterized protein (344 aa).

This is an uncharacterized protein from Aquifex aeolicus (strain VF5).